Consider the following 269-residue polypeptide: Large ribosomal subunit protein uL3m (269 aa).

The N-terminal 19 residues, 1-19 (MSKFLQGSIFSISKLHVRY), are a transit peptide targeting the mitochondrion.

The protein belongs to the universal ribosomal protein uL3 family. As to quaternary structure, component of the mitochondrial large ribosomal subunit (mt-LSU). Mature yeast 74S mitochondrial ribosomes consist of a small (37S) and a large (54S) subunit. The 37S small subunit contains a 15S ribosomal RNA (15S mt-rRNA) and 34 different proteins. The 54S large subunit contains a 21S rRNA (21S mt-rRNA) and 46 different proteins.

Its subcellular location is the mitochondrion. Component of the mitochondrial ribosome (mitoribosome), a dedicated translation machinery responsible for the synthesis of mitochondrial genome-encoded proteins, including at least some of the essential transmembrane subunits of the mitochondrial respiratory chain. The mitoribosomes are attached to the mitochondrial inner membrane and translation products are cotranslationally integrated into the membrane. The polypeptide is Large ribosomal subunit protein uL3m (MRPL9) (Saccharomyces cerevisiae (strain ATCC 204508 / S288c) (Baker's yeast)).